The sequence spans 748 residues: Cytosolic phospholipase A2 (748 aa).

The phospholipid binding stretch occupies residues 1–178; the sequence is MSFIDPYQHI…MKKLLGPKKS (178 aa). Ser-2 bears the Phosphoserine mark. The C2 domain occupies 6 to 122; that stretch reads PYQHIIVEHQ…KVGEKKEVPF (117 aa). Residues Asp-40, Thr-41, Asp-43, Asn-65, Asp-93, Ala-94, and Asn-95 each coordinate Ca(2+). The PLA2c domain occupies 140-739; sequence SCPDLRFSMA…SNVEARKFFN (600 aa). Ser-228 acts as the Nucleophile in catalysis. A Phosphothreonine modification is found at Thr-268. The disordered stretch occupies residues 427–458; it reads KHIVSNDSSDSDDEAQGPKGTENEEAEKEYQS. Phosphoserine is present on residues Ser-434, Ser-435, and Ser-437. A Phosphoserine; by MAPK modification is found at Ser-505. Phosphoserine is present on Ser-515. Lys-540 participates in a covalent cross-link: Glycyl lysine isopeptide (Lys-Gly) (interchain with G-Cter in SUMO2). The active-site Proton acceptor is the Asp-548. Lys-605 participates in a covalent cross-link: Glycyl lysine isopeptide (Lys-Gly) (interchain with G-Cter in SUMO2). Residues Ser-726 and Ser-728 each carry the phosphoserine modification.

As to quaternary structure, interacts with KAT5. Phosphorylated at both Ser-505 and Ser-726 in response to mitogenic stimuli. Expressed in various organs including uterus, kidney, spleen, liver, heart, lung and brain (at protein level).

It is found in the cytoplasm. The protein resides in the golgi apparatus membrane. It localises to the nucleus envelope. It catalyses the reaction a 1,2-diacyl-sn-glycero-3-phosphocholine + H2O = a 1-acyl-sn-glycero-3-phosphocholine + a fatty acid + H(+). The catalysed reaction is a 1-O-alkyl-2-acyl-sn-glycero-3-phosphocholine + H2O = a 1-O-alkyl-sn-glycero-3-phosphocholine + a fatty acid + H(+). It carries out the reaction a 1-acyl-sn-glycero-3-phosphocholine + H2O = sn-glycerol 3-phosphocholine + a fatty acid + H(+). The enzyme catalyses 1-hexadecanoyl-2-(5Z,8Z,11Z,14Z-eicosatetraenoyl)-sn-glycero-3-phosphocholine + H2O = 1-hexadecanoyl-sn-glycero-3-phosphocholine + (5Z,8Z,11Z,14Z)-eicosatetraenoate + H(+). It catalyses the reaction 1,2-di-(5Z,8Z,11Z,14Z-eicosatetraenoyl)-sn-glycero-3-phosphocholine + H2O = 1-(5Z,8Z,11Z,14Z-eicosatetraenoyl)-sn-glycero-3-phosphocholine + (5Z,8Z,11Z,14Z)-eicosatetraenoate + H(+). The catalysed reaction is 1-octadecanoyl-2-(5Z,8Z,11Z,14Z-eicosatetraenoyl)-sn-glycero-3-phosphocholine + H2O = 1-octadecanoyl-sn-glycero-3-phosphocholine + (5Z,8Z,11Z,14Z)-eicosatetraenoate + H(+). It carries out the reaction 1-hexadecanoyl-2-(9Z,12Z-octadecadienoyl)-sn-glycero-3-phosphocholine + H2O = (9Z,12Z)-octadecadienoate + 1-hexadecanoyl-sn-glycero-3-phosphocholine + H(+). The enzyme catalyses 1-octadecanoyl-2-(9Z,12Z,15Z-octadecatrienoyl)-sn-glycero-3-phosphocholine + H2O = (9Z,12Z,15Z)-octadecatrienoate + 1-octadecanoyl-sn-glycero-3-phosphocholine + H(+). It catalyses the reaction 1-(5Z,8Z,11Z,14Z-eicosatetraenoyl)-2-hexadecanoyl-sn-glycero-3-phosphocholine + H2O = 1-(5Z,8Z,11Z,14Z-eicosatetraenoyl)-sn-glycero-3-phosphocholine + hexadecanoate + H(+). The catalysed reaction is 1-O-hexadecyl-2-(5Z,8Z,11Z,14Z)-eicosatetraenoyl-sn-glycero-3-phosphocholine + H2O = 1-O-hexadecyl-sn-glycero-3-phosphocholine + (5Z,8Z,11Z,14Z)-eicosatetraenoate + H(+). It carries out the reaction 1,2-di-(9Z-octadecenoyl)-sn-glycero-3-phospho-(1'-sn-glycerol) + H2O = 1-(9Z-octadecenoyl)-sn-glycero-3-phospho-(1'-sn-glycerol) + (9Z)-octadecenoate + H(+). The enzyme catalyses 1-octadecanoyl-2-(5Z,8Z,11Z,14Z-eicosatetraenoyl)-sn-glycero-3-phosphate + H2O = 1-octadecanoyl-sn-glycero-3-phosphate + (5Z,8Z,11Z,14Z)-eicosatetraenoate + H(+). It catalyses the reaction 1-hexadecanoyl-sn-glycero-3-phosphocholine + H2O = sn-glycerol 3-phosphocholine + hexadecanoate + H(+). The catalysed reaction is 2-(prostaglandin E2)-sn-glycero-3-phosphoethanolamine + H2O = sn-glycero-3-phosphoethanolamine + prostaglandin E2 + H(+). It carries out the reaction 2-[(15S)-hydroxy-(5Z,8Z,11Z,13E)-eicosatetraenoyl]-sn-glycero-3-phosphocholine + H2O = (15S)-hydroxy-(5Z,8Z,11Z,13E)-eicosatetraenoate + sn-glycerol 3-phosphocholine + H(+). The enzyme catalyses 2-[(15R)-hydroxy-(5Z,8Z,11Z,13E)-eicosatetraenoyl]-sn-glycero-3-phosphocholine + H2O = (15R)-hydroxy-(5Z,8Z,11Z,13E)-eicosatetraenoate + sn-glycerol 3-phosphocholine + H(+). It catalyses the reaction 2-(prostaglandin E2)-sn-glycero-3-phosphocholine + H2O = prostaglandin E2 + sn-glycerol 3-phosphocholine + H(+). The catalysed reaction is 2-[(11R)-hydroxy-(5Z,8Z,12E,14Z)-eicosatetraenoyl]-sn-glycero-3-phosphocholine + H2O = (11R)-hydroxy-(5Z,8Z,12E,14Z)-eicosatetraenoate + sn-glycerol 3-phosphocholine + H(+). It carries out the reaction 1-(5Z,8Z,11Z,14Z-eicosatetraenoyl)-2-O-hexadecyl-sn-glycero-3-phosphocholine + H2O = 2-O-hexadecyl-sn-glycero-3-phosphocholine + (5Z,8Z,11Z,14Z)-eicosatetraenoate + H(+). The enzyme catalyses 1-octadecanoyl-2-(5Z,8Z,11Z,14Z-eicosatetraenoyl)-sn-glycero-3-phosphocholine + glycerol = 1-(5Z,8Z,11Z,14Z-eicosatetraenoyl)-glycerol + 1-octadecanoyl-sn-glycero-3-phosphocholine. It catalyses the reaction 1-octadecanoyl-2-(9Z,12Z,15Z-octadecatrienoyl)-sn-glycero-3-phosphocholine + glycerol = 1-(9Z,12Z,15Z-octadecatrienoyl)-glycerol + 1-octadecanoyl-sn-glycero-3-phosphocholine. The protein operates within membrane lipid metabolism; glycerophospholipid metabolism. It functions in the pathway lipid metabolism; arachidonate metabolism. Its pathway is lipid metabolism; prostaglandin biosynthesis. It participates in lipid metabolism; leukotriene B4 biosynthesis. Its activity is regulated as follows. Activated by cytosolic calcium, which is necessary for binding to membrane lipids. Activated by phosphorylation in response to mitogenic stimuli. Stimulated by agonists such as ATP and thrombin. Has primarily calcium-dependent phospholipase and lysophospholipase activities, with a major role in membrane lipid remodeling and biosynthesis of lipid mediators of the inflammatory response. Plays an important role in embryo implantation and parturition through its ability to trigger prostanoid production. Preferentially hydrolyzes the ester bond of the fatty acyl group attached at sn-2 position of phospholipids (phospholipase A2 activity). Selectively hydrolyzes sn-2 arachidonoyl group from membrane phospholipids, providing the precursor for eicosanoid biosynthesis via the cyclooxygenase pathway. In an alternative pathway of eicosanoid biosynthesis, hydrolyzes sn-2 fatty acyl chain of eicosanoid lysophopholipids to release free bioactive eicosanoids. Hydrolyzes the ester bond of the fatty acyl group attached at sn-1 position of phospholipids (phospholipase A1 activity) only if an ether linkage rather than an ester linkage is present at the sn-2 position. This hydrolysis is not stereospecific. Has calcium-independent phospholipase A2 and lysophospholipase activities in the presence of phosphoinositides. Has O-acyltransferase activity. Catalyzes the transfer of fatty acyl chains from phospholipids to a primary hydroxyl group of glycerol (sn-1 or sn-3), potentially contributing to monoacylglycerol synthesis. The polypeptide is Cytosolic phospholipase A2 (Pla2g4a) (Mus musculus (Mouse)).